We begin with the raw amino-acid sequence, 743 residues long: Peptide transporter family 1 (743 aa).

The segment at 1–28 (MASEITNGKNGQNGKNGQKEESDSQIAP) is disordered. The span at 7 to 16 (NGKNGQNGKN) shows a compositional bias: low complexity. A run of 10 helical transmembrane segments spans residues 74 to 94 (VLFH…ALIA), 104 to 124 (ILYL…GAVP), 132 to 152 (AVTV…KPCV), 173 to 193 (FSLF…FTPI), 207 to 227 (FSLA…IFMA), 334 to 354 (VVNP…IYPA), 364 to 384 (LQKL…SAGL), 597 to 619 (LPQI…EFSY), 629 to 649 (VLQA…VVIA), and 659 to 679 (GEFT…LWLA).

Belongs to the major facilitator superfamily. Proton-dependent oligopeptide transporter (POT/PTR) (TC 2.A.17) family. Expressed in thorax and abdomen of females: apical epithelial membranes of midgut, rectum, and reproductive tract. Also expressed in neuropil of the central nervous system, with elevated expression within the alpha- and beta-lobes of the mushroom bodies.

The protein resides in the membrane. In terms of biological role, important role in absorption of dietary peptides. High-affinity transporter of alanylalanine. Dipeptide transport activity is proton dependent. The chain is Peptide transporter family 1 (yin) from Drosophila melanogaster (Fruit fly).